A 279-amino-acid chain; its full sequence is 3-methyl-2-oxobutanoate hydroxymethyltransferase (279 aa).

Positions 49 and 88 each coordinate Mg(2+). 3-methyl-2-oxobutanoate is bound by residues 49–50 (DS), aspartate 88, and lysine 118. Glutamate 120 serves as a coordination point for Mg(2+). Residue glutamate 187 is the Proton acceptor of the active site.

It belongs to the PanB family. Homodecamer; pentamer of dimers. Mg(2+) serves as cofactor.

The protein resides in the cytoplasm. The enzyme catalyses 3-methyl-2-oxobutanoate + (6R)-5,10-methylene-5,6,7,8-tetrahydrofolate + H2O = 2-dehydropantoate + (6S)-5,6,7,8-tetrahydrofolate. It functions in the pathway cofactor biosynthesis; (R)-pantothenate biosynthesis; (R)-pantoate from 3-methyl-2-oxobutanoate: step 1/2. In terms of biological role, catalyzes the reversible reaction in which hydroxymethyl group from 5,10-methylenetetrahydrofolate is transferred onto alpha-ketoisovalerate to form ketopantoate. This chain is 3-methyl-2-oxobutanoate hydroxymethyltransferase, found in Agrobacterium fabrum (strain C58 / ATCC 33970) (Agrobacterium tumefaciens (strain C58)).